A 467-amino-acid polypeptide reads, in one-letter code: Methylenetetrahydrofolate--tRNA-(uracil-5-)-methyltransferase TrmFO (467 aa).

10–15 contacts FAD; sequence GAGLAG.

It belongs to the MnmG family. TrmFO subfamily. FAD serves as cofactor.

It localises to the cytoplasm. It catalyses the reaction uridine(54) in tRNA + (6R)-5,10-methylene-5,6,7,8-tetrahydrofolate + NADH + H(+) = 5-methyluridine(54) in tRNA + (6S)-5,6,7,8-tetrahydrofolate + NAD(+). The enzyme catalyses uridine(54) in tRNA + (6R)-5,10-methylene-5,6,7,8-tetrahydrofolate + NADPH + H(+) = 5-methyluridine(54) in tRNA + (6S)-5,6,7,8-tetrahydrofolate + NADP(+). Functionally, catalyzes the folate-dependent formation of 5-methyl-uridine at position 54 (M-5-U54) in all tRNAs. The sequence is that of Methylenetetrahydrofolate--tRNA-(uracil-5-)-methyltransferase TrmFO from Prochlorococcus marinus (strain MIT 9515).